Consider the following 361-residue polypeptide: Ornithine carbamoyltransferase, mitochondrial (361 aa).

Residues 1 to 24 (MIPTARCGALRQKIPVQAVRQYSS) constitute a mitochondrion transit peptide. Residues 89-92 (STRT), R140, H167, and Q170 each bind carbamoyl phosphate. 4 residues coordinate L-ornithine: N207, D273, S277, and M278. The active-site Proton acceptor is the C315. Carbamoyl phosphate is bound by residues 315–316 (CL) and R342.

This sequence belongs to the aspartate/ornithine carbamoyltransferase superfamily. OTCase family. In terms of assembly, homotrimer.

The protein localises to the mitochondrion matrix. The enzyme catalyses carbamoyl phosphate + L-ornithine = L-citrulline + phosphate + H(+). It participates in amino-acid biosynthesis; L-arginine biosynthesis; L-arginine from L-ornithine and carbamoyl phosphate: step 1/3. This Aspergillus terreus protein is Ornithine carbamoyltransferase, mitochondrial (arg1).